The chain runs to 687 residues: MKDIFQLVSDYQPAGDQPEAIERLTEGLAAGEMYQTLLGVTGSGKTFTIANMIQQVQRPTIVLAPNKTLAAQLYSEMREFFPRNAVGYFVSYYDYYQPEAYVPASDTYIGKDASVNDHIEQMRLSATKAFLERPDAIVVASVSAIYGLGDKDSYLNMVLHLMVGDTVDHRGILRRLAELQYQRNDRELYRGTYRVRGEIIDIYPAESEQEAIRVELFDDEIESLSYFDPLTGEILHRVSRLTIYPKTHYVTPREVLLQAVDEIKIELAERLEQLYGANKLVEAQRLEQRTRFDIEMILELGYCTGIENYSRFLSRRQPGEAPPTLFDYLPKNALLVIDESHVTVPQLGAMYRGDRARKETLVEYGFRLPSALDNRPLKFEEWEQLAPQTIFVSATPGPYEQQHSGAVIEQVVRPTGLVDPAVEVRPAGSQVDDLLSEIRQRTAADERVLVTVLTKRMAEDLTQYLEQHEVRVRYLHSDIDTVERVEIIRDLRLGKFDVLVGINLLREGLDIPEVSLVAILDADKEGFLRSERSLIQTIGRAARNLHGRAILYGDKVTGSMGRAIAETERRRKKQLAFNETHRIIPRGIQKAVREIIDGVYTPGSGKGHRSPDRVEEKAAEYTRLPPQQLAKRLQQLERQMHKHAQNLEFEQAARLRDEIKRIKGWVFNGADSASAPRQENSQARAIC.

The 389-residue stretch at 26-414 (EGLAAGEMYQ…GAVIEQVVRP (389 aa)) folds into the Helicase ATP-binding domain. 39 to 46 (GVTGSGKT) contacts ATP. The Beta-hairpin motif lies at 92–115 (YYDYYQPEAYVPASDTYIGKDASV). A Helicase C-terminal domain is found at 430–596 (QVDDLLSEIR…GIQKAVREII (167 aa)). One can recognise a UVR domain in the interval 630–665 (AKRLQQLERQMHKHAQNLEFEQAARLRDEIKRIKGW).

This sequence belongs to the UvrB family. In terms of assembly, forms a heterotetramer with UvrA during the search for lesions. Interacts with UvrC in an incision complex.

The protein localises to the cytoplasm. The UvrABC repair system catalyzes the recognition and processing of DNA lesions. A damage recognition complex composed of 2 UvrA and 2 UvrB subunits scans DNA for abnormalities. Upon binding of the UvrA(2)B(2) complex to a putative damaged site, the DNA wraps around one UvrB monomer. DNA wrap is dependent on ATP binding by UvrB and probably causes local melting of the DNA helix, facilitating insertion of UvrB beta-hairpin between the DNA strands. Then UvrB probes one DNA strand for the presence of a lesion. If a lesion is found the UvrA subunits dissociate and the UvrB-DNA preincision complex is formed. This complex is subsequently bound by UvrC and the second UvrB is released. If no lesion is found, the DNA wraps around the other UvrB subunit that will check the other stand for damage. This Nitrosococcus oceani (strain ATCC 19707 / BCRC 17464 / JCM 30415 / NCIMB 11848 / C-107) protein is UvrABC system protein B.